We begin with the raw amino-acid sequence, 360 residues long: Alanine racemase (360 aa).

The active-site Proton acceptor; specific for D-alanine is the lysine 36. Position 36 is an N6-(pyridoxal phosphate)lysine (lysine 36). Arginine 132 is a substrate binding site. Tyrosine 256 serves as the catalytic Proton acceptor; specific for L-alanine. Methionine 304 contributes to the substrate binding site.

Belongs to the alanine racemase family. Pyridoxal 5'-phosphate serves as cofactor.

It catalyses the reaction L-alanine = D-alanine. Its pathway is amino-acid biosynthesis; D-alanine biosynthesis; D-alanine from L-alanine: step 1/1. In terms of biological role, catalyzes the interconversion of L-alanine and D-alanine. May also act on other amino acids. The protein is Alanine racemase (alr) of Haemophilus influenzae (strain ATCC 51907 / DSM 11121 / KW20 / Rd).